Reading from the N-terminus, the 330-residue chain is Biotin synthase (330 aa).

A Radical SAM core domain is found at 53-276 (NNIRLNVLLS…VFPFKELRLS (224 aa)). [4Fe-4S] cluster contacts are provided by C68, C72, and C75. [2Fe-2S] cluster-binding residues include C112, C144, C204, and R274.

Belongs to the radical SAM superfamily. Biotin synthase family. Homodimer. [4Fe-4S] cluster serves as cofactor. [2Fe-2S] cluster is required as a cofactor.

The enzyme catalyses (4R,5S)-dethiobiotin + (sulfur carrier)-SH + 2 reduced [2Fe-2S]-[ferredoxin] + 2 S-adenosyl-L-methionine = (sulfur carrier)-H + biotin + 2 5'-deoxyadenosine + 2 L-methionine + 2 oxidized [2Fe-2S]-[ferredoxin]. Its pathway is cofactor biosynthesis; biotin biosynthesis; biotin from 7,8-diaminononanoate: step 2/2. In terms of biological role, catalyzes the conversion of dethiobiotin (DTB) to biotin by the insertion of a sulfur atom into dethiobiotin via a radical-based mechanism. This is Biotin synthase from Streptococcus agalactiae serotype III (strain NEM316).